The sequence spans 281 residues: 2,3,4,5-tetrahydropyridine-2,6-dicarboxylate N-succinyltransferase (281 aa).

Residues Arg-108 and Asp-145 each coordinate substrate.

This sequence belongs to the transferase hexapeptide repeat family. As to quaternary structure, homotrimer.

It is found in the cytoplasm. The catalysed reaction is (S)-2,3,4,5-tetrahydrodipicolinate + succinyl-CoA + H2O = (S)-2-succinylamino-6-oxoheptanedioate + CoA. It participates in amino-acid biosynthesis; L-lysine biosynthesis via DAP pathway; LL-2,6-diaminopimelate from (S)-tetrahydrodipicolinate (succinylase route): step 1/3. The protein is 2,3,4,5-tetrahydropyridine-2,6-dicarboxylate N-succinyltransferase of Parvibaculum lavamentivorans (strain DS-1 / DSM 13023 / NCIMB 13966).